A 178-amino-acid polypeptide reads, in one-letter code: Arginine repressor (178 aa).

The segment at Met-1–Ala-20 is disordered.

This sequence belongs to the ArgR family.

It localises to the cytoplasm. It participates in amino-acid biosynthesis; L-arginine biosynthesis [regulation]. In terms of biological role, regulates arginine biosynthesis genes. The polypeptide is Arginine repressor (Streptomyces griseus subsp. griseus (strain JCM 4626 / CBS 651.72 / NBRC 13350 / KCC S-0626 / ISP 5235)).